Consider the following 233-residue polypeptide: Merozoite surface protein 1 (233 aa).

An N-terminal signal peptide occupies residues 1–19; the sequence is MKIIFFLCSFLFFIINTQC. The segment covering 58–67 has biased composition (polar residues); it reads SGTAVTTSTP. Residues 58–110 form a disordered region; it reads SGTAVTTSTPGSKGSVASGGSGGSVASGGSVASGGSGNSRRTNPSDNSSDSDA. Positions 74 to 94 are enriched in gly residues; sequence ASGGSGGSVASGGSVASGGSG. The span at 95 to 107 shows a compositional bias: polar residues; sequence NSRRTNPSDNSSD. Residue N104 is glycosylated (N-linked (GlcNAc...) asparagine).

In terms of assembly, forms a complex composed of subunits p83, p30, p38, and p42 which remain non-covalently associated; the complex is formed at the merozoite surface prior to egress from host erythrocytes. Forms a complex composed of processed MSP1 subunits, MSP6 subunit p36 and MSP7; the complex is formed at the merozoite surface prior to egress from host erythrocytes. Within the complex, interacts (via subunit p38) with MSP6 subunit p36 and (via subunits p83, p30 and p38) with MSP7 (via subunit p22). Forms a complex composed of MSP1, MSP6, DBLMSP1 and DBLMSP2. Within the complex, interacts (via subunit p38) with DBLMSP1 and DBLMSP2. Forms a complex composed of MSP1, and rhoptry proteins RhopH3, RAP1 and CLAG9/RhopH3. Within the complex, interacts (via subunits p42 and p19) with RhopH3 (via C-terminus). Forms a complex composed of MSP1, MSP6, MSP7, MSP9 and MSP3; within the complex, MSP6 and MSP9 mediate the binding to the host erythrocyte. Interacts (via subunits p19 and p42) with MSP9; the interaction is direct; MSP1 subunits p19 or p42, and MSP9 form a co-ligand complex that interacts with host SLC4A1/Band 3 protein. May interact with PFD6. Interacts with host spectrin. Post-translationally, the p190 precursor is cleaved by SUB1 prior to merozoite egress into 4 subunits p83, p30, p38, and p42 which remain non-covalently associated. SUB1-mediated proteolytic cleavage occurs in an orderly manner; the first cleavage occurs at the p83/p30 site, followed by cleavage at the p30/p38 site, the last cleavage occurs at the p38/p42 site. The order of cleavage is essential for parasite viability. SUB1-mediated processing is essential for merozoite egress. In a second processing step during erythrocyte invasion, p42 is cleaved by SUB2 into p33 and p19; the latter remains attached to the merozoite surface via its GPI-anchor and stays on the surface during the subsequent ring stage.

The protein localises to the cell membrane. Its subcellular location is the secreted. In terms of biological role, during the asexual blood stage, involved in merozoite egress from host erythrocytes possibly via its interaction with the host cytoskeleton protein spectrin resulting in the destabilization of the host cytoskeleton and thus leading to erythrocyte cell membrane rupture. Involved in the binding to host erythrocytes and is required for host erythrocyte invasion. The polypeptide is Merozoite surface protein 1 (Plasmodium falciparum (isolate CDC / Honduras)).